The primary structure comprises 416 residues: Heat shock protein DDB_G0280215 (416 aa).

Positions 37–150 (SMDWGWKPRM…SQHISLFGRE (114 aa)) constitute a sHSP domain. Positions 216-235 (ETKERERRIRDTKGETEKKK) are disordered.

This sequence belongs to the small heat shock protein (HSP20) family.

The polypeptide is Heat shock protein DDB_G0280215 (Dictyostelium discoideum (Social amoeba)).